The sequence spans 321 residues: Chloroplastic calcium uniporter protein (321 aa).

The N-terminal 56 residues, 1–56, are a transit peptide targeting the chloroplast; the sequence is MSSKKSLVQSLFNISKTYSRISGLTRMRPTKSGGIPPDAGDSGIRRRFLHKRAFFS. The next 2 membrane-spanning stretches (helical) occupy residues 223–243 and 249–269; these read LWAG…LTFW and VMEP…YAFF. The short motif at 247–255 is the Selectivity filter element; that stretch reads WDVMEPICF. Glutamate 251 is a Ca(2+) binding site.

Belongs to the MCU (TC 1.A.77) family.

It is found in the plastid. The protein resides in the chloroplast membrane. It carries out the reaction Ca(2+)(in) = Ca(2+)(out). Its function is as follows. Chloroplastic membrane calcium uniporter that mediates calcium uptake into chloroplast stroma. Constitutes a pore-forming and calcium-conducting subunit. Chloroplastic calcium homeostasis plays key roles in cellular physiology. Promotes calcium uptake into chloroplast stroma in response to osmotic-stress, fine-tuning cytosolic MAPK3/MAPK6 phosphorylation and affecting stomata opening. This is Chloroplastic calcium uniporter protein from Arabidopsis thaliana (Mouse-ear cress).